The chain runs to 426 residues: 4-aminobutyrate aminotransferase GabT (426 aa).

Pyridoxal 5'-phosphate-binding positions include 111 to 112 (GS) and Q242. K268 carries the N6-(pyridoxal phosphate)lysine modification. T297 lines the pyridoxal 5'-phosphate pocket.

Belongs to the class-III pyridoxal-phosphate-dependent aminotransferase family. As to quaternary structure, homotetramer. Pyridoxal 5'-phosphate serves as cofactor.

It carries out the reaction 4-aminobutanoate + 2-oxoglutarate = succinate semialdehyde + L-glutamate. The catalysed reaction is 5-aminopentanoate + 2-oxoglutarate = 5-oxopentanoate + L-glutamate. It participates in amino-acid degradation; 4-aminobutanoate degradation. It functions in the pathway amino-acid degradation. Pyridoxal phosphate-dependent enzyme that catalyzes transamination between primary amines and alpha-keto acids. Catalyzes the transfer of the amino group from gamma-aminobutyrate (GABA) to alpha-ketoglutarate (KG) to yield succinic semialdehyde (SSA) and glutamate. Thereby functions in a GABA degradation pathway that allows some E.coli strains to utilize GABA as a nitrogen source for growth. Also catalyzes the conversion of 5-aminovalerate to glutarate semialdehyde, as part of a L-lysine degradation pathway that proceeds via cadaverine, glutarate and L-2-hydroxyglutarate. This Escherichia coli (strain K12) protein is 4-aminobutyrate aminotransferase GabT (gabT).